A 117-amino-acid chain; its full sequence is Prefoldin subunit beta (117 aa).

The protein belongs to the prefoldin subunit beta family. As to quaternary structure, heterohexamer of two alpha and four beta subunits.

The protein resides in the cytoplasm. Molecular chaperone capable of stabilizing a range of proteins. Seems to fulfill an ATP-independent, HSP70-like function in archaeal de novo protein folding. The chain is Prefoldin subunit beta from Pyrococcus furiosus (strain ATCC 43587 / DSM 3638 / JCM 8422 / Vc1).